Reading from the N-terminus, the 517-residue chain is Protein BTN1 (517 aa).

The next 8 helical transmembrane spans lie at 24-44 (LFAAFMIFGLLNNVLYVIILS), 57-77 (GVVALFNIFPALITKVVWPLL), 88-108 (VGFCTICSWFGIITIALSSSL), 112-132 (LLGISLASLSSGMGELTFLQL), 146-166 (LGAWSSGTGFAGVAGAGIWWL), 169-189 (GLGVKGGLGLSSFLPLFFPIT), 371-391 (PAIIQFLVLSLLFLQAKTFFF), and 409-429 (SITIVFLLICLEGLCGGSGYV).

Belongs to the battenin family.

It is found in the vacuole membrane. Involved in vacuolar transport and vacuole pH homeostasis. Also required for cytokinesis. The chain is Protein BTN1 (BTN1) from Cryptococcus neoformans var. neoformans serotype D (strain B-3501A) (Filobasidiella neoformans).